The sequence spans 256 residues: Acetyl-coenzyme A carboxylase carboxyl transferase subunit alpha (256 aa).

The CoA carboxyltransferase C-terminal domain maps to 1 to 236 (MTDVARILKE…KEHLKTEINQ (236 aa)).

This sequence belongs to the AccA family. As to quaternary structure, acetyl-CoA carboxylase is a heterohexamer composed of biotin carboxyl carrier protein (AccB), biotin carboxylase (AccC) and two subunits each of ACCase subunit alpha (AccA) and ACCase subunit beta (AccD).

The protein localises to the cytoplasm. The catalysed reaction is N(6)-carboxybiotinyl-L-lysyl-[protein] + acetyl-CoA = N(6)-biotinyl-L-lysyl-[protein] + malonyl-CoA. It participates in lipid metabolism; malonyl-CoA biosynthesis; malonyl-CoA from acetyl-CoA: step 1/1. In terms of biological role, component of the acetyl coenzyme A carboxylase (ACC) complex. First, biotin carboxylase catalyzes the carboxylation of biotin on its carrier protein (BCCP) and then the CO(2) group is transferred by the carboxyltransferase to acetyl-CoA to form malonyl-CoA. The sequence is that of Acetyl-coenzyme A carboxylase carboxyl transferase subunit alpha from Streptococcus uberis (strain ATCC BAA-854 / 0140J).